The sequence spans 226 residues: ATP-dependent dethiobiotin synthetase BioD (226 aa).

12 to 17 (GIGKTV) contributes to the ATP binding site. Thr16 contacts Mg(2+). Lys37 is an active-site residue. Residue Thr41 coordinates substrate. ATP contacts are provided by residues Asp49, 108 to 111 (EGAG), 169 to 170 (GS), and 197 to 199 (PAG). 2 residues coordinate Mg(2+): Asp49 and Glu108.

Belongs to the dethiobiotin synthetase family. In terms of assembly, homodimer. Requires Mg(2+) as cofactor.

The protein localises to the cytoplasm. It catalyses the reaction (7R,8S)-7,8-diammoniononanoate + CO2 + ATP = (4R,5S)-dethiobiotin + ADP + phosphate + 3 H(+). It functions in the pathway cofactor biosynthesis; biotin biosynthesis; biotin from 7,8-diaminononanoate: step 1/2. Functionally, catalyzes a mechanistically unusual reaction, the ATP-dependent insertion of CO2 between the N7 and N8 nitrogen atoms of 7,8-diaminopelargonic acid (DAPA, also called 7,8-diammoniononanoate) to form a ureido ring. This Mycolicibacterium gilvum (strain PYR-GCK) (Mycobacterium gilvum (strain PYR-GCK)) protein is ATP-dependent dethiobiotin synthetase BioD.